The primary structure comprises 187 residues: 1,6-anhydro-N-acetylmuramyl-L-alanine amidase AmpD (187 aa).

The N-acetylmuramoyl-L-alanine amidase domain maps to S29–P167. A Zn(2+)-binding site is contributed by H34. E116 acts as the Proton acceptor in catalysis. H154 and D164 together coordinate Zn(2+).

The protein belongs to the N-acetylmuramoyl-L-alanine amidase 2 family. The cofactor is Zn(2+).

The protein localises to the cytoplasm. The catalysed reaction is Hydrolyzes the link between N-acetylmuramoyl residues and L-amino acid residues in certain cell-wall glycopeptides.. Its function is as follows. Involved in cell wall peptidoglycan recycling. Specifically cleaves the amide bond between the lactyl group of N-acetylmuramic acid and the alpha-amino group of the L-alanine in degradation products containing an anhydro N-acetylmuramyl moiety. The chain is 1,6-anhydro-N-acetylmuramyl-L-alanine amidase AmpD (ampD) from Salmonella typhimurium (strain SL1344).